The primary structure comprises 118 residues: uncharacterized protein (118 aa).

The first 27 residues, 1-27 (MPIKEPDVWALIWSWLQTNLSSSSAQS), serve as a signal peptide directing secretion.

This is an uncharacterized protein from Haemophilus influenzae (strain ATCC 51907 / DSM 11121 / KW20 / Rd).